The chain runs to 140 residues: 3-hydroxyacyl-[acyl-carrier-protein] dehydratase FabZ (140 aa).

The active site involves H46.

The protein belongs to the thioester dehydratase family. FabZ subfamily.

It is found in the cytoplasm. It catalyses the reaction a (3R)-hydroxyacyl-[ACP] = a (2E)-enoyl-[ACP] + H2O. Involved in unsaturated fatty acids biosynthesis. Catalyzes the dehydration of short chain beta-hydroxyacyl-ACPs and long chain saturated and unsaturated beta-hydroxyacyl-ACPs. This Pseudothermotoga lettingae (strain ATCC BAA-301 / DSM 14385 / NBRC 107922 / TMO) (Thermotoga lettingae) protein is 3-hydroxyacyl-[acyl-carrier-protein] dehydratase FabZ.